Here is a 951-residue protein sequence, read N- to C-terminus: Valine--tRNA ligase (951 aa).

A 'HIGH' region motif is present at residues Pro42–His52. The 'KMSKS' region motif lies at Lys554 to Ser558. Lys557 is an ATP binding site. The stretch at Ala880–Gln944 forms a coiled coil.

The protein belongs to the class-I aminoacyl-tRNA synthetase family. ValS type 1 subfamily. In terms of assembly, monomer.

The protein resides in the cytoplasm. The enzyme catalyses tRNA(Val) + L-valine + ATP = L-valyl-tRNA(Val) + AMP + diphosphate. Catalyzes the attachment of valine to tRNA(Val). As ValRS can inadvertently accommodate and process structurally similar amino acids such as threonine, to avoid such errors, it has a 'posttransfer' editing activity that hydrolyzes mischarged Thr-tRNA(Val) in a tRNA-dependent manner. In Shigella boydii serotype 4 (strain Sb227), this protein is Valine--tRNA ligase.